The chain runs to 86 residues: Putative antitoxin VapB36 (86 aa).

Possibly the antitoxin component of a type II toxin-antitoxin (TA) system. Its cognate toxin is VapC36 (Potential). This Mycobacterium tuberculosis (strain CDC 1551 / Oshkosh) protein is Putative antitoxin VapB36 (vapB36).